A 325-amino-acid polypeptide reads, in one-letter code: Peroxidase 68 (325 aa).

An N-terminal signal peptide occupies residues 1 to 28 (MECYEQSRQRAAFVVLLFIVMLGSQAQA). The residue at position 29 (glutamine 29) is a Pyrrolidone carboxylic acid. Cystine bridges form between cysteine 39–cysteine 119, cysteine 72–cysteine 77, cysteine 125–cysteine 321, and cysteine 205–cysteine 230. Histidine 70 serves as the catalytic Proton acceptor. 5 residues coordinate Ca(2+): aspartate 71, valine 74, glycine 76, aspartate 78, and serine 80. Asparagine 99 carries N-linked (GlcNAc...) asparagine glycosylation. Proline 168 serves as a coordination point for substrate. Heme b is bound at residue histidine 198. Threonine 199 is a binding site for Ca(2+). N-linked (GlcNAc...) asparagine glycosylation is present at asparagine 214. Ca(2+)-binding residues include aspartate 245, threonine 248, and aspartate 253.

The protein belongs to the peroxidase family. Classical plant (class III) peroxidase subfamily. Heme b serves as cofactor. Requires Ca(2+) as cofactor.

The protein localises to the secreted. The catalysed reaction is 2 a phenolic donor + H2O2 = 2 a phenolic radical donor + 2 H2O. Functionally, removal of H(2)O(2), oxidation of toxic reductants, biosynthesis and degradation of lignin, suberization, auxin catabolism, response to environmental stresses such as wounding, pathogen attack and oxidative stress. These functions might be dependent on each isozyme/isoform in each plant tissue. The polypeptide is Peroxidase 68 (PER68) (Arabidopsis thaliana (Mouse-ear cress)).